Here is a 101-residue protein sequence, read N- to C-terminus: DNA-binding protein TubR (101 aa).

Homodimer. Dimers bind to DNA, forming a protein-bound filament which may form a helix around the TubZ filament.

Functionally, a DNA-binding protein that is part of the type III plasmid partition system used to ensure correct segregation of the pBM400 plasmid. Binds the plasmid origin of replication, probably cooperatively, forming a ring or short helix with external DNA. Its effect on RNA expression has not been shown. The chain is DNA-binding protein TubR from Priestia megaterium (strain ATCC 12872 / QMB1551) (Bacillus megaterium).